Consider the following 194-residue polypeptide: ATP-dependent Clp protease proteolytic subunit (194 aa).

The active-site Nucleophile is S98. The active site involves H123.

This sequence belongs to the peptidase S14 family. Fourteen ClpP subunits assemble into 2 heptameric rings which stack back to back to give a disk-like structure with a central cavity, resembling the structure of eukaryotic proteasomes.

It localises to the cytoplasm. The enzyme catalyses Hydrolysis of proteins to small peptides in the presence of ATP and magnesium. alpha-casein is the usual test substrate. In the absence of ATP, only oligopeptides shorter than five residues are hydrolyzed (such as succinyl-Leu-Tyr-|-NHMec, and Leu-Tyr-Leu-|-Tyr-Trp, in which cleavage of the -Tyr-|-Leu- and -Tyr-|-Trp bonds also occurs).. Cleaves peptides in various proteins in a process that requires ATP hydrolysis. Has a chymotrypsin-like activity. Plays a major role in the degradation of misfolded proteins. The protein is ATP-dependent Clp protease proteolytic subunit of Clostridium botulinum (strain Loch Maree / Type A3).